The following is a 352-amino-acid chain: Mitochondrial ubiquitin ligase activator of NFKB 1 (352 aa).

Residues 1–8 (MESGSRPS) lie on the Cytoplasmic side of the membrane. The helical transmembrane segment at 9–29 (LGQVILLGTSSMVTAVLYSIY) threads the bilayer. The Mitochondrial intermembrane portion of the chain corresponds to 30–238 (RQKAQVAQEL…LLHRQESSVR (209 aa)). A Glycyl lysine isopeptide (Lys-Gly) (interchain with G-Cter in ubiquitin) cross-link involves residue lysine 52. Residues 239-259 (LWKILVLVFGFATCATLFFIL) form a helical membrane-spanning segment. At 260 to 352 (RKQYLHRQER…ITRVIPLYNS (93 aa)) the chain is on the cytoplasmic side. Lysine 299 is covalently cross-linked (Glycyl lysine isopeptide (Lys-Gly) (interchain with G-Cter in ubiquitin)). An RING-type zinc finger spans residues 302-340 (CVVCLSNFKSCVFLECGHVCSCRQCYLALPEPKRCPICR).

In terms of assembly, homooligomer. Interacts with MAP3K7/TAK1. Interacts with UBC9. Interacts with and sumoylates DNM1L. Interacts with MAVS. Interacts with TP53 (via N-terminus); the interaction leads to ubiquitination and proteasomal degradation of TP53. Ubiquitinated by PRKN during mitophagy, leading to its degradation and enhancement of mitophagy. Deubiquitinated by USP30. In terms of tissue distribution, expressed in cortical neurons (at protein level).

Its subcellular location is the mitochondrion outer membrane. The protein resides in the peroxisome. It carries out the reaction S-ubiquitinyl-[E2 ubiquitin-conjugating enzyme]-L-cysteine + [acceptor protein]-L-lysine = [E2 ubiquitin-conjugating enzyme]-L-cysteine + N(6)-ubiquitinyl-[acceptor protein]-L-lysine.. Its pathway is protein modification; protein ubiquitination. It participates in protein modification; protein sumoylation. Functionally, exhibits weak E3 ubiquitin-protein ligase activity. E3 ubiquitin ligases accept ubiquitin from an E2 ubiquitin-conjugating enzyme in the form of a thioester and then directly transfer the ubiquitin to targeted substrates. Can ubiquitinate AKT1 preferentially at 'Lys-284' involving 'Lys-48'-linked polyubiquitination and seems to be involved in regulation of Akt signaling by targeting phosphorylated Akt to proteasomal degradation. Mediates polyubiquitination of cytoplasmic TP53 at 'Lys-27' which targets TP53 for proteasomal degradation, thus reducing TP53 levels in the cytoplasm and mitochondrion. Proposed to preferentially act as a SUMO E3 ligase at physiological concentrations. Plays a role in the control of mitochondrial morphology by promoting mitochondrial fragmentation, and influences mitochondrial localization. Likely to promote mitochondrial fission through negatively regulating the mitochondrial fusion proteins MFN1 and MFN2, acting in a pathway that is parallel to the PRKN/PINK1 regulatory pathway. May also be involved in the sumoylation of the membrane fission protein DNM1L. Inhibits cell growth. When overexpressed, activates JNK through MAP3K7/TAK1 and induces caspase-dependent apoptosis. Involved in the modulation of innate immune defense against viruses by inhibiting RIGI-dependent antiviral response. Can mediate RIGI sumoylation and disrupt its polyubiquitination. In Mus musculus (Mouse), this protein is Mitochondrial ubiquitin ligase activator of NFKB 1 (Mul1).